Here is a 349-residue protein sequence, read N- to C-terminus: Septin-2 (349 aa).

Residues 33–305 enclose the Septin-type G domain; it reads KGFEFTLMVV…ENFRSERLKR (273 aa). The G1 motif stretch occupies residues 43–50; that stretch reads GESGLGKS. Residues 43-50, Thr77, Gly103, 182-190, Gly240, and Arg255 each bind GTP; these read GESGLGKS and KADTLTLKE. The segment at 100-103 is G3 motif; it reads DTPG. Positions 181–184 are G4 motif; the sequence is AKAD. An important for dimerization region spans residues 259–269; the sequence is WGVVEVENPEH.

The protein belongs to the TRAFAC class TrmE-Era-EngA-EngB-Septin-like GTPase superfamily. Septin GTPase family. Septins polymerize into heterooligomeric protein complexes that form filaments, and associate with cellular membranes, actin filaments and microtubules. GTPase activity is required for filament formation. Can form heterooligomers with other family members and form filaments.

It is found in the cytoplasm. The protein resides in the cytoskeleton. It localises to the spindle. Its subcellular location is the cleavage furrow. The protein localises to the midbody. It is found in the cell cortex. The protein resides in the cell projection. It localises to the cilium membrane. Its function is as follows. Filament-forming cytoskeletal GTPase. Required for normal organization of the actin cytoskeleton. Plays a role in the biogenesis of polarized columnar-shaped epithelium by maintaining polyglutamylated microtubules, thus facilitating efficient vesicle transport, and by impeding MAP4 binding to tubulin. Required for the progression through mitosis. Forms a scaffold at the midplane of the mitotic splindle required to maintain CENPE localization at kinetochores and consequently chromosome congression. During anaphase, may be required for chromosome segregation and spindle elongation. Plays a role in ciliogenesis and collective cell movements. In cilia, required for the integrity of the diffusion barrier at the base of the primary cilium that prevents diffusion of transmembrane proteins between the cilia and plasma membranes. In Gallus gallus (Chicken), this protein is Septin-2.